The following is a 155-amino-acid chain: Ribosome maturation factor RimP (155 aa).

Belongs to the RimP family.

It is found in the cytoplasm. Functionally, required for maturation of 30S ribosomal subunits. In Hamiltonella defensa subsp. Acyrthosiphon pisum (strain 5AT), this protein is Ribosome maturation factor RimP.